Consider the following 541-residue polypeptide: DEAD-box ATP-dependent RNA helicase 57 (541 aa).

A compositionally biased stretch (acidic residues) spans 43 to 52 (VEEEEDTEQP). The tract at residues 43–72 (VEEEEDTEQPEAEKVIVSSKKRKRRSSNSV) is disordered. The Q motif signature appears at 141 to 169 (ELSSRYGCEGYILRNLAELGFKEPTPIQR). In terms of domain architecture, Helicase ATP-binding spans 172-342 (IPILLSGREC…RSIMHDAVRV (171 aa)). 185 to 192 (APTGSGKT) contacts ATP. The short motif at 289–292 (DESD) is the DEAD box element. The Helicase C-terminal domain occupies 370-514 (ALRQSFAESL…EVPSWIMSLK (145 aa)). The disordered stretch occupies residues 517–541 (KWRKHRPRRDSISTKPKADKNDTDE). Basic and acidic residues predominate over residues 525–541 (RDSISTKPKADKNDTDE).

Belongs to the DEAD box helicase family. DDX52/ROK1 subfamily.

It carries out the reaction ATP + H2O = ADP + phosphate + H(+). In Arabidopsis thaliana (Mouse-ear cress), this protein is DEAD-box ATP-dependent RNA helicase 57 (RH57).